A 1217-amino-acid chain; its full sequence is Valine--tRNA ligase (1217 aa).

The GST C-terminal domain maps to 27-155; it reads NAKQQSQVWQ…ISLCEKMVPV (129 aa). The 'HIGH' region motif lies at 293 to 303; it reads PNVTGSLHLGH. The 'KMSKS' region motif lies at 809–813; sequence KMSKS. Residue K812 coordinates ATP.

Belongs to the class-I aminoacyl-tRNA synthetase family.

It catalyses the reaction tRNA(Val) + L-valine + ATP = L-valyl-tRNA(Val) + AMP + diphosphate. The chain is Valine--tRNA ligase (vars1) from Takifugu rubripes (Japanese pufferfish).